A 91-amino-acid polypeptide reads, in one-letter code: Large ribosomal subunit protein bL27 (91 aa).

Residues 1–22 (MAHKKGQGSSRNGRDSNPQYRG) form a disordered region. Positions 7–19 (QGSSRNGRDSNPQ) are enriched in polar residues.

The protein belongs to the bacterial ribosomal protein bL27 family.

The chain is Large ribosomal subunit protein bL27 from Myxococcus xanthus (strain DK1622).